The chain runs to 373 residues: Envelope glycoprotein C homolog (373 aa).

A signal peptide spans 1–25 (MVSNMRSTRTALTGWVGIFLVLSLQ). The interval 58-93 (EVPNSPTTELSTTVATKTAVPTTESTSSSEAHRNSS) is disordered. A compositionally biased stretch (polar residues) spans 59–68 (VPNSPTTELS). A compositionally biased stretch (low complexity) spans 69 to 80 (TTVATKTAVPTT). N-linked (GlcNAc...) asparagine; by host glycosylation is found at Asn91, Asn111, Asn203, and Asn345. One can recognise an Ig-like domain in the interval 249–347 (PASVDVLAPP…GDMISTSNAT (99 aa)).

It belongs to the herpesviridae glycoprotein C family.

In Gallus gallus (Chicken), this protein is Envelope glycoprotein C homolog (gC).